The following is a 194-amino-acid chain: Recombination protein RecR (194 aa).

The segment at 53 to 68 (CEICFNLDVTSPCSIC) adopts a C4-type zinc-finger fold. The Toprim domain occupies 76-171 (SLLCIVEELG…KVTRLACGIP (96 aa)).

This sequence belongs to the RecR family.

Functionally, may play a role in DNA repair. It seems to be involved in an RecBC-independent recombinational process of DNA repair. It may act with RecF and RecO. This is Recombination protein RecR from Anaplasma phagocytophilum (strain HZ).